The sequence spans 232 residues: Orotidine 5'-phosphate decarboxylase (232 aa).

Residues Asp-13, Lys-35, 62–71 (DLKFHDIPNT), Thr-122, Arg-182, Gln-191, Gly-211, and Arg-212 contribute to the substrate site. Lys-64 functions as the Proton donor in the catalytic mechanism.

This sequence belongs to the OMP decarboxylase family. Type 1 subfamily. In terms of assembly, homodimer.

The enzyme catalyses orotidine 5'-phosphate + H(+) = UMP + CO2. The protein operates within pyrimidine metabolism; UMP biosynthesis via de novo pathway; UMP from orotate: step 2/2. Functionally, catalyzes the decarboxylation of orotidine 5'-monophosphate (OMP) to uridine 5'-monophosphate (UMP). The protein is Orotidine 5'-phosphate decarboxylase of Pseudomonas paraeruginosa (strain DSM 24068 / PA7) (Pseudomonas aeruginosa (strain PA7)).